The chain runs to 138 residues: ATP synthase epsilon chain (138 aa).

Belongs to the ATPase epsilon chain family. In terms of assembly, F-type ATPases have 2 components, CF(1) - the catalytic core - and CF(0) - the membrane proton channel. CF(1) has five subunits: alpha(3), beta(3), gamma(1), delta(1), epsilon(1). CF(0) has three main subunits: a, b and c.

It localises to the cell membrane. In terms of biological role, produces ATP from ADP in the presence of a proton gradient across the membrane. This Buchnera aphidicola subsp. Schizaphis graminum (strain Sg) protein is ATP synthase epsilon chain (atpC).